The chain runs to 306 residues: SDS degradation transcriptional activation protein (306 aa).

In terms of domain architecture, HTH lysR-type spans 1-59 (MNDLRQLRHFVALAEHGHFARAAEAVNLSQPALSRSIQALENGLGCRLLDRGPRQVSLT). Positions 19–38 (FARAAEAVNLSQPALSRSIQ) form a DNA-binding region, H-T-H motif.

The protein belongs to the LysR transcriptional regulatory family.

In terms of biological role, activates the transcription of the sdsA gene for sodium dodecyl sulfate (SDS) degradation. In Pseudomonas sp. (strain ATCC 19151), this protein is SDS degradation transcriptional activation protein (sdsB).